We begin with the raw amino-acid sequence, 993 residues long: ATP-dependent DNA helicase MPH1 (993 aa).

A Helicase ATP-binding domain is found at 94–261; sequence IVHKSLFQNT…EVVNNLDISK (168 aa). 107–114 contacts ATP; that stretch reads IPTGMGKT. Residues 209 to 212 carry the DEAH box motif; that stretch reads DEAH. One can recognise a Helicase C-terminal domain in the interval 507–655; it reads KVERLHRQEQ…CIDYKKSDRI (149 aa). The tract at residues 530-551 is disordered; the sequence is NDKLERSARRTGSSEEAQISGM. The segment covering 539-551 has biased composition (polar residues); sequence RTGSSEEAQISGM.

This sequence belongs to the DEAD box helicase family. DEAH subfamily. FANCM sub-subfamily. In terms of assembly, interacts with the MHF histone-fold complex to form the FANCM-MHF complex.

The protein localises to the nucleus. It carries out the reaction ATP + H2O = ADP + phosphate + H(+). ATP-dependent DNA helicase involved in DNA damage repair by homologous recombination and in genome maintenance. Capable of unwinding D-loops. Plays a role in limiting crossover recombinants during mitotic DNA double-strand break (DSB) repair. Component of a FANCM-MHF complex which promotes gene conversion at blocked replication forks, probably by reversal of the stalled fork. This chain is ATP-dependent DNA helicase MPH1, found in Saccharomyces cerevisiae (strain YJM789) (Baker's yeast).